The following is a 426-amino-acid chain: Serine--tRNA ligase (426 aa).

Residues 1–15 (MIDVKDLSENPDKFR) show a composition bias toward basic and acidic residues. A disordered region spans residues 1-22 (MIDVKDLSENPDKFRASQRARG). 228–230 (TSE) lines the L-serine pocket. Residues 259–261 (RRE) and valine 275 contribute to the ATP site. L-serine is bound at residue glutamate 282. Residue 346–349 (ELTS) participates in ATP binding. An L-serine-binding site is contributed by threonine 386.

It belongs to the class-II aminoacyl-tRNA synthetase family. Type-1 seryl-tRNA synthetase subfamily. As to quaternary structure, homodimer. The tRNA molecule binds across the dimer.

The protein resides in the cytoplasm. It carries out the reaction tRNA(Ser) + L-serine + ATP = L-seryl-tRNA(Ser) + AMP + diphosphate + H(+). The enzyme catalyses tRNA(Sec) + L-serine + ATP = L-seryl-tRNA(Sec) + AMP + diphosphate + H(+). The protein operates within aminoacyl-tRNA biosynthesis; selenocysteinyl-tRNA(Sec) biosynthesis; L-seryl-tRNA(Sec) from L-serine and tRNA(Sec): step 1/1. Catalyzes the attachment of serine to tRNA(Ser). Is also able to aminoacylate tRNA(Sec) with serine, to form the misacylated tRNA L-seryl-tRNA(Sec), which will be further converted into selenocysteinyl-tRNA(Sec). The sequence is that of Serine--tRNA ligase from Pseudarthrobacter chlorophenolicus (strain ATCC 700700 / DSM 12829 / CIP 107037 / JCM 12360 / KCTC 9906 / NCIMB 13794 / A6) (Arthrobacter chlorophenolicus).